The following is a 418-amino-acid chain: MHNTIYVLGFRHQTTPASVREKLAFSPENILNTLPFLQAQCAGAEILLLSTCNRSEWYFASNTPPRLEEWLYQHTAISSEELKRHLFIYTDREAVQHLYRVACGLDSLILGEPQILGQLKAAYRLAKKAGSIGSWLERLFQHSFALAKHVRHQTDIGKNPVSVAYAGVQLTHQFFDDYSKRTAIIVGAGETAQLVARYLHDLKIKRLIIANRTLNRAQQLAESVGGYALSLPQLADHLHEADMIFGCARADVFLVTQNMAITALQRRQNTLQVYIDLGIPHNFDRNIDNKENAFLYDMDNLAQLIDKNRETRQKAAAEAETFIRLYSNDFLNWTQEKPQQHMIRHIRADAHNIRQKLLIMAYRQLAQGADPEKVLAEMSYKLTNKLLHQPCALIHAIPPDHKDWLAVVADTFNAELPK.

Substrate-binding positions include 51–54 (TCNR), Ser-107, 112–114 (EPQ), and Gln-118. Residue Cys-52 is the Nucleophile of the active site. 187 to 192 (GAGETA) is a binding site for NADP(+).

The protein belongs to the glutamyl-tRNA reductase family. Homodimer.

The enzyme catalyses (S)-4-amino-5-oxopentanoate + tRNA(Glu) + NADP(+) = L-glutamyl-tRNA(Glu) + NADPH + H(+). It functions in the pathway porphyrin-containing compound metabolism; protoporphyrin-IX biosynthesis; 5-aminolevulinate from L-glutamyl-tRNA(Glu): step 1/2. In terms of biological role, catalyzes the NADPH-dependent reduction of glutamyl-tRNA(Glu) to glutamate 1-semialdehyde (GSA). The protein is Glutamyl-tRNA reductase of Dichelobacter nodosus (strain VCS1703A).